The chain runs to 1047 residues: Error-prone DNA polymerase (1047 aa).

The protein belongs to the DNA polymerase type-C family. DnaE2 subfamily.

The protein resides in the cytoplasm. It carries out the reaction DNA(n) + a 2'-deoxyribonucleoside 5'-triphosphate = DNA(n+1) + diphosphate. In terms of biological role, DNA polymerase involved in damage-induced mutagenesis and translesion synthesis (TLS). It is not the major replicative DNA polymerase. The protein is Error-prone DNA polymerase of Methylococcus capsulatus (strain ATCC 33009 / NCIMB 11132 / Bath).